The sequence spans 304 residues: Glycine--tRNA ligase alpha subunit (304 aa).

Belongs to the class-II aminoacyl-tRNA synthetase family. Tetramer of two alpha and two beta subunits.

It localises to the cytoplasm. It catalyses the reaction tRNA(Gly) + glycine + ATP = glycyl-tRNA(Gly) + AMP + diphosphate. The sequence is that of Glycine--tRNA ligase alpha subunit from Photorhabdus laumondii subsp. laumondii (strain DSM 15139 / CIP 105565 / TT01) (Photorhabdus luminescens subsp. laumondii).